A 116-amino-acid polypeptide reads, in one-letter code: Putative UPF0320 protein YLL065W (116 aa).

This sequence belongs to the UPF0320 family.

This is Putative UPF0320 protein YLL065W from Saccharomyces cerevisiae (strain ATCC 204508 / S288c) (Baker's yeast).